The chain runs to 256 residues: Ubiquinone/menaquinone biosynthesis C-methyltransferase UbiE (256 aa).

Residues Thr79, Asp100, and 128-129 each bind S-adenosyl-L-methionine; that span reads DA.

Belongs to the class I-like SAM-binding methyltransferase superfamily. MenG/UbiE family.

It catalyses the reaction a 2-demethylmenaquinol + S-adenosyl-L-methionine = a menaquinol + S-adenosyl-L-homocysteine + H(+). The enzyme catalyses a 2-methoxy-6-(all-trans-polyprenyl)benzene-1,4-diol + S-adenosyl-L-methionine = a 5-methoxy-2-methyl-3-(all-trans-polyprenyl)benzene-1,4-diol + S-adenosyl-L-homocysteine + H(+). Its pathway is quinol/quinone metabolism; menaquinone biosynthesis; menaquinol from 1,4-dihydroxy-2-naphthoate: step 2/2. It functions in the pathway cofactor biosynthesis; ubiquinone biosynthesis. Its function is as follows. Methyltransferase required for the conversion of demethylmenaquinol (DMKH2) to menaquinol (MKH2) and the conversion of 2-polyprenyl-6-methoxy-1,4-benzoquinol (DDMQH2) to 2-polyprenyl-3-methyl-6-methoxy-1,4-benzoquinol (DMQH2). The polypeptide is Ubiquinone/menaquinone biosynthesis C-methyltransferase UbiE (Pseudomonas aeruginosa (strain LESB58)).